We begin with the raw amino-acid sequence, 480 residues long: Glutamate--tRNA ligase (480 aa).

The 'HIGH' region signature appears at 21–31 (PSPTGYLHVGG). Residues C110, C112, C137, and H139 each coordinate Zn(2+). A 'KMSKS' region motif is present at residues 248-252 (KLSKR). K251 lines the ATP pocket.

This sequence belongs to the class-I aminoacyl-tRNA synthetase family. Glutamate--tRNA ligase type 1 subfamily. As to quaternary structure, monomer. The cofactor is Zn(2+).

The protein localises to the cytoplasm. It catalyses the reaction tRNA(Glu) + L-glutamate + ATP = L-glutamyl-tRNA(Glu) + AMP + diphosphate. Its function is as follows. Catalyzes the attachment of glutamate to tRNA(Glu) in a two-step reaction: glutamate is first activated by ATP to form Glu-AMP and then transferred to the acceptor end of tRNA(Glu). This chain is Glutamate--tRNA ligase, found in Actinobacillus succinogenes (strain ATCC 55618 / DSM 22257 / CCUG 43843 / 130Z).